We begin with the raw amino-acid sequence, 286 residues long: Shikimate dehydrogenase (NADP(+)) (286 aa).

Residues 19-21 and Thr-66 contribute to the shikimate site; that span reads SLS. The Proton acceptor role is filled by Lys-70. Residues Asn-91 and Asp-107 each coordinate shikimate. NADP(+) contacts are provided by residues 129–133 and Leu-229; that span reads GSGGA. Tyr-231 lines the shikimate pocket. Gly-252 contacts NADP(+).

Belongs to the shikimate dehydrogenase family. As to quaternary structure, homodimer.

It catalyses the reaction shikimate + NADP(+) = 3-dehydroshikimate + NADPH + H(+). It participates in metabolic intermediate biosynthesis; chorismate biosynthesis; chorismate from D-erythrose 4-phosphate and phosphoenolpyruvate: step 4/7. Its function is as follows. Involved in the biosynthesis of the chorismate, which leads to the biosynthesis of aromatic amino acids. Catalyzes the reversible NADPH linked reduction of 3-dehydroshikimate (DHSA) to yield shikimate (SA). This is Shikimate dehydrogenase (NADP(+)) from Prochlorococcus marinus (strain MIT 9215).